We begin with the raw amino-acid sequence, 174 residues long: RNA pyrophosphohydrolase (174 aa).

The 144-residue stretch at 6–149 (GYRPNVGIIL…KRDVYLGALK (144 aa)) folds into the Nudix hydrolase domain. The short motif at 38-59 (GGIKPGESPETAMYRELYEEVG) is the Nudix box element.

It belongs to the Nudix hydrolase family. RppH subfamily. Requires a divalent metal cation as cofactor.

In terms of biological role, accelerates the degradation of transcripts by removing pyrophosphate from the 5'-end of triphosphorylated RNA, leading to a more labile monophosphorylated state that can stimulate subsequent ribonuclease cleavage. The chain is RNA pyrophosphohydrolase from Neisseria meningitidis serogroup A / serotype 4A (strain DSM 15465 / Z2491).